The primary structure comprises 591 residues: PDZ and LIM domain protein 5 (591 aa).

Serine 2 bears the N-acetylserine mark. Serine 2 is modified (phosphoserine). The region spanning 2–85 is the PDZ domain; the sequence is SNYSVSLVGP…SLNMTLQRAS (84 aa). The residue at position 89 (lysine 89) is an N6-acetyllysine; alternate. Lysine 89 carries the post-translational modification N6-succinyllysine; alternate. Lysine 89 participates in a covalent cross-link: Glycyl lysine isopeptide (Lys-Gly) (interchain with G-Cter in SUMO2); alternate. 5 positions are modified to phosphoserine: glutamate 102, lysine 105, serine 111, serine 134, and serine 137. Disordered regions lie at residues 121 to 166 and 186 to 398; these read TNMA…PTPV and SADQ…DQDT. The segment covering 134–143 has biased composition (polar residues); that stretch reads SVSSPKVTSI. Positions 144 to 166 are enriched in low complexity; that stretch reads PSPSSAFTPAHAATSSHASPTPV. 2 stretches are compositionally biased toward polar residues: residues 186–195 and 205–217; these read SADQCSSPPN and RQPT…SESA. A phosphoserine mark is found at glutamine 218, serine 228, and serine 260. Basic and acidic residues-rich tracts occupy residues 258-273 and 294-304; these read DASK…DWRP and HLTESENDNTK. Positions 310-339 are enriched in low complexity; that stretch reads QEPSQQPASSGASPLSASEGPESPGSSRPS. 3 positions are modified to phosphoserine: serine 313, proline 316, and serine 322. Lysine 350 carries the N6-acetyllysine modification. The span at 353–385 shows a compositional bias: polar residues; sequence GSTSVKSPSWQRPNQAAPSTGRISNNARSSGTG. Phosphoserine occurs at positions 359 and 361. 3 LIM zinc-binding domains span residues 413–472, 472–531, and 531–591; these read PMCA…FFAP, PECG…LFGT, and TICR…SVNF.

As to quaternary structure, interacts with various PKC isoforms through the LIM domains. Interacts with actin and alpha-actinin through the PDZ domain. Interacts (via LIM domains) with SIPA1L1/SPAR; this interaction may occur preferentially with isoform 1.

Its subcellular location is the postsynaptic density. The protein resides in the presynapse. It is found in the postsynapse. It localises to the cytoplasm. The protein localises to the cytosol. Functionally, may play an important role in the heart development by scaffolding PKC to the Z-disk region. May play a role in the regulation of cardiomyocyte expansion. Isoforms lacking the LIM domains may negatively modulate the scaffolding activity of isoform 1. Overexpression promotes the development of heart hypertrophy. Contributes to the regulation of dendritic spine morphogenesis in neurons. May be required to restrain postsynaptic growth of excitatory synapses. Isoform 1, but not isoform 2, expression favors spine thinning and elongation. The chain is PDZ and LIM domain protein 5 from Mus musculus (Mouse).